A 209-amino-acid polypeptide reads, in one-letter code: Large ribosomal subunit protein uL4 (209 aa).

The disordered stretch occupies residues Gly-46–Ala-72. The span at Ser-59–Ala-72 shows a compositional bias: basic residues.

It belongs to the universal ribosomal protein uL4 family. In terms of assembly, part of the 50S ribosomal subunit.

One of the primary rRNA binding proteins, this protein initially binds near the 5'-end of the 23S rRNA. It is important during the early stages of 50S assembly. It makes multiple contacts with different domains of the 23S rRNA in the assembled 50S subunit and ribosome. Functionally, forms part of the polypeptide exit tunnel. In Borreliella burgdorferi (strain ATCC 35210 / DSM 4680 / CIP 102532 / B31) (Borrelia burgdorferi), this protein is Large ribosomal subunit protein uL4.